The following is a 708-amino-acid chain: Leucine-rich repeat neuronal protein 3 (708 aa).

The signal sequence occupies residues 1-22; the sequence is MKDMPLRIHVLLGLAITTLVQA. Residues 23–69 form the LRRNT domain; it reads VDKKVDCPRLCTCEIRPWFTPRSIYMEASTVDCNDLGLLTFPARLPA. Residues 23–628 are Extracellular-facing; that stretch reads VDKKVDCPRL…KEYEKNNTTT (606 aa). LRR repeat units follow at residues 70 to 91, 93 to 114, 117 to 138, 141 to 162, 165 to 186, 189 to 210, 213 to 234, 237 to 258, 261 to 282, 285 to 304, 310 to 332, and 335 to 358; these read NTQI…TDFP, NLTG…NVKK, QLLS…CLSE, NLQE…AFIG, NLLR…WFDA, NLEI…NFKP, NLRS…ALVG, NLES…ALQK, NLKF…DFSN, HLKE…DSLA, DLRK…AFFR, and KLES…ESLP. Asn93 and Asn103 each carry an N-linked (GlcNAc...) asparagine glycan. A glycan (N-linked (GlcNAc...) asparagine) is linked at Asn223. The 54-residue stretch at 368-421 folds into the LRRCT domain; that stretch reads NPIRCDCVIRWMNMNKTNIRFMEPDSLFCVDPPEFQGQNVRQVHFRDMMEICLP. An N-linked (GlcNAc...) asparagine glycan is attached at Asn382. One can recognise an Ig-like C2-type domain in the interval 421–514; it reads PLIAPESFPS…DLKSVMIKVD (94 aa). Cys444 and Cys496 are oxidised to a cystine. N-linked (GlcNAc...) asparagine glycans are attached at residues Asn522, Asn579, Asn608, Asn624, and Asn625. In terms of domain architecture, Fibronectin type-III spans 523 to 617; it reads GSLNIKIRDI…NVTTKGLHPD (95 aa). Residues 629-649 form a helical membrane-spanning segment; that stretch reads LMACLGGLLGIIGVICLISCL. Residues 650-708 are Cytoplasmic-facing; it reads SPEMNCDGGHSYVRNYLQKPTFALGELYPPLINLWEAGKEKSTSLKVKATVIGLPTNMS.

It is found in the membrane. The polypeptide is Leucine-rich repeat neuronal protein 3 (LRRN3) (Homo sapiens (Human)).